Consider the following 191-residue polypeptide: Protein GrpE (191 aa).

Basic and acidic residues-rich tracts occupy residues 1 to 19 (MKDE…EPES) and 29 to 45 (QQGE…GEIK). The interval 1–45 (MKDEHNQEHDHLSPKEPESYQKAYACKEQQGEEKQEASEKEGEIK) is disordered.

It belongs to the GrpE family. Homodimer.

It is found in the cytoplasm. Participates actively in the response to hyperosmotic and heat shock by preventing the aggregation of stress-denatured proteins, in association with DnaK and GrpE. It is the nucleotide exchange factor for DnaK and may function as a thermosensor. Unfolded proteins bind initially to DnaJ; upon interaction with the DnaJ-bound protein, DnaK hydrolyzes its bound ATP, resulting in the formation of a stable complex. GrpE releases ADP from DnaK; ATP binding to DnaK triggers the release of the substrate protein, thus completing the reaction cycle. Several rounds of ATP-dependent interactions between DnaJ, DnaK and GrpE are required for fully efficient folding. This Helicobacter pylori (strain J99 / ATCC 700824) (Campylobacter pylori J99) protein is Protein GrpE.